Reading from the N-terminus, the 339-residue chain is Putative pectinesterase 10 (339 aa).

The first 28 residues, 1–28 (MKGVTIHNFCYSYFKVCLLVMSLAYGSA), serve as a signal peptide directing secretion. Asparagine 112 carries N-linked (GlcNAc...) asparagine glycosylation. Threonine 116 contacts substrate. Catalysis depends on aspartate 169, which acts as the Proton donor. Aspartate 190 (nucleophile) is an active-site residue. Residues arginine 252 and tryptophan 254 each coordinate substrate. N-linked (GlcNAc...) asparagine glycosylation occurs at asparagine 322.

Belongs to the pectinesterase family. As to expression, expressed in siliques.

It is found in the secreted. It localises to the cell wall. It carries out the reaction [(1-&gt;4)-alpha-D-galacturonosyl methyl ester](n) + n H2O = [(1-&gt;4)-alpha-D-galacturonosyl](n) + n methanol + n H(+). It participates in glycan metabolism; pectin degradation; 2-dehydro-3-deoxy-D-gluconate from pectin: step 1/5. Functionally, acts in the modification of cell walls via demethylesterification of cell wall pectin. This is Putative pectinesterase 10 (PME10) from Arabidopsis thaliana (Mouse-ear cress).